We begin with the raw amino-acid sequence, 287 residues long: Nucleoside kinase (287 aa).

Residues aspartate 13, asparagine 28, glycine 38, and asparagine 42 each coordinate substrate. Residue glutamine 102 coordinates ATP. Residues serine 104 and glutamine 150 each contribute to the substrate site. ATP-binding positions include asparagine 173 and 196–201 (TNGERG). Aspartate 227 contributes to the substrate binding site. The Proton acceptor role is filled by aspartate 227.

It belongs to the carbohydrate kinase PfkB family. Homodimer. The cofactor is Mg(2+). Requires Co(2+) as cofactor.

It catalyses the reaction adenosine + ATP = AMP + ADP + H(+). The catalysed reaction is cytidine + ATP = CMP + ADP + H(+). The enzyme catalyses guanosine + ATP = GMP + ADP + H(+). It carries out the reaction inosine + ATP = IMP + ADP + H(+). Functionally, nucleoside kinase with broad substrate specificity. Catalyzes the phosphorylation of a variety of nucleosides to the corresponding nucleoside 5'-mono-phosphate in the presence of phosphate donors and divalent cations. Displays the most efficient activity with guanosine, followed by inosine, cytidine, and adenosine. Negligible enzymatic activity is detected with thymidine, uridine, and 2-deoxyadenosine. ATP is the most efficient phosphate donor, but can also use GTP and ITP. Shows no sugar kinase activity, since it is unable to phosphorylate ribose, fructose-1-phosphate, or fructose-6-phosphate. This is Nucleoside kinase from Thermoplasma acidophilum (strain ATCC 25905 / DSM 1728 / JCM 9062 / NBRC 15155 / AMRC-C165).